The primary structure comprises 329 residues: Anthranilate phosphoribosyltransferase (329 aa).

5-phospho-alpha-D-ribose 1-diphosphate-binding positions include Gly-78, 81–82 (GD), 88–91 (NLST), 106–114 (KHGNRAASS), and Ser-118. Gly-78 contacts anthranilate. Mg(2+) is bound at residue Ser-90. Asn-109 serves as a coordination point for anthranilate. Position 164 (Arg-164) interacts with anthranilate. Mg(2+)-binding residues include Asp-221 and Glu-222.

It belongs to the anthranilate phosphoribosyltransferase family. As to quaternary structure, homodimer. Requires Mg(2+) as cofactor.

The enzyme catalyses N-(5-phospho-beta-D-ribosyl)anthranilate + diphosphate = 5-phospho-alpha-D-ribose 1-diphosphate + anthranilate. It participates in amino-acid biosynthesis; L-tryptophan biosynthesis; L-tryptophan from chorismate: step 2/5. Functionally, catalyzes the transfer of the phosphoribosyl group of 5-phosphorylribose-1-pyrophosphate (PRPP) to anthranilate to yield N-(5'-phosphoribosyl)-anthranilate (PRA). The sequence is that of Anthranilate phosphoribosyltransferase from Thermus thermophilus (strain ATCC BAA-163 / DSM 7039 / HB27).